Reading from the N-terminus, the 195-residue chain is Cbp/p300-interacting transactivator 1 (195 aa).

2 disordered regions span residues 1–24 (MPTMSRPALDVKGGTSPVKENANP) and 51–149 (ASNG…SPAI). Positions 54 to 78 (GTKASGAPTSSSGSPSPISSSTATP) are enriched in low complexity. Positions 97 to 106 (MQLQKLNSQY) are enriched in polar residues. Residues 137–148 (SLSPSAGAQSPA) show a composition bias toward low complexity. A Nuclear export signal motif is present at residues 160–169 (LMSLVVELGL).

It belongs to the CITED family. In terms of assembly, interacts (via C-terminus) with CREBBP. Interacts with EGR2. Homodimer. Binds to RBM14. Interacts (via N-terminus) with HSPA8; the interaction suppresses the association of CITED1 with p300/CBP and SMAD-mediated transcription transactivation. Interacts (via C-terminus) with TOX3 (via HGM box); the interaction increases estrogen-response element (ERE)-dependent transcription and protection against cell death. Interacts with ESR1; the interaction occurs in a estrogen-dependent manner. Interacts (unphosphorylated form preferentially and via C-terminus) with EP300. In terms of processing, phosphorylated. Phosphorylation changes in a cell cycle-dependent manner and reduces its transcriptional cofactor activity.

The protein resides in the nucleus. The protein localises to the cytoplasm. Functionally, transcriptional coactivator of the p300/CBP-mediated transcription complex. Enhances SMAD-mediated transcription by strengthening the functional link between the DNA-binding SMAD transcription factors and the p300/CBP transcription coactivator complex. Stimulates estrogen-dependent transactivation activity mediated by estrogen receptors signaling; stabilizes the interaction of estrogen receptor ESR1 and histone acetyltransferase EP300. Positively regulates TGF-beta signaling through its association with the SMAD/p300/CBP-mediated transcriptional coactivator complex. Induces transcription from estrogen-responsive promoters and protection against cell death. Potentiates EGR2-mediated transcriptional activation activity from the ERBB2 promoter. Acts as an inhibitor of osteoblastic mineralization through a cAMP-dependent parathyroid hormone receptor signaling. May play a role in pigmentation of melanocytes. Associates with chromatin to the estrogen-responsive TGF-alpha promoter region in a estrogen-dependent manner. In Bos taurus (Bovine), this protein is Cbp/p300-interacting transactivator 1 (CITED1).